Consider the following 377-residue polypeptide: Carbonic anhydrase 1 (377 aa).

The signal sequence occupies residues Met1–Ala20. The Alpha-carbonic anhydrase domain maps to Asp38 to His318. 3 disulfide bridges follow: Cys61–Cys264, Cys194–Cys198, and Cys296–Cys351. An N-linked (GlcNAc...) asparagine glycan is attached at Asn101. Residue His112 is the Proton acceptor of the active site. A glycan (N-linked (GlcNAc...) asparagine) is linked at Asn135. Residues His163, His165, and His182 each contribute to the Zn(2+) site. Substrate is bound by residues Thr260 and Thr260 to Thr261. N-linked (GlcNAc...) asparagine glycosylation is present at Asn297.

This sequence belongs to the alpha-carbonic anhydrase family. Tetramer of two large and two small subunits linked by two disulfide bonds. Zn(2+) serves as cofactor.

It is found in the periplasm. It catalyses the reaction hydrogencarbonate + H(+) = CO2 + H2O. Functionally, reversible hydration of carbon dioxide. The polypeptide is Carbonic anhydrase 1 (CAH1) (Chlamydomonas reinhardtii (Chlamydomonas smithii)).